Here is a 349-residue protein sequence, read N- to C-terminus: Glycosyltransferase 8 domain-containing protein 2 (349 aa).

The Cytoplasmic segment spans residues 1–6; the sequence is MALLRK. A helical; Signal-anchor for type II membrane protein membrane pass occupies residues 7-24; it reads INQVLLFLLIVTLCVILY. The Lumenal segment spans residues 25–349; the sequence is KKVHKGTVPK…AGIFKLNHHS (325 aa). Asn-234 is a glycosylation site (N-linked (GlcNAc...) asparagine).

Belongs to the glycosyltransferase 8 family.

It is found in the membrane. The protein is Glycosyltransferase 8 domain-containing protein 2 (GLT8D2) of Homo sapiens (Human).